Reading from the N-terminus, the 950-residue chain is Leucine--tRNA ligase (950 aa).

The 'HIGH' region signature appears at 72 to 83; sequence PYPSGEGLHVGH. The 'KMSKS' region motif lies at 722 to 726; that stretch reads KIGKS. Lys-725 provides a ligand contact to ATP.

The protein belongs to the class-I aminoacyl-tRNA synthetase family.

The protein resides in the cytoplasm. It catalyses the reaction tRNA(Leu) + L-leucine + ATP = L-leucyl-tRNA(Leu) + AMP + diphosphate. The protein is Leucine--tRNA ligase of Mycobacterium sp. (strain KMS).